Here is a 45-residue protein sequence, read N- to C-terminus: Large ribosomal subunit protein bL34 (45 aa).

Belongs to the bacterial ribosomal protein bL34 family.

The sequence is that of Large ribosomal subunit protein bL34 from Opitutus terrae (strain DSM 11246 / JCM 15787 / PB90-1).